A 114-amino-acid chain; its full sequence is uncharacterized protein (114 aa).

The region spanning Tyr-13–Val-99 is the ABM domain.

This is an uncharacterized protein from Bacillus subtilis (strain 168).